Consider the following 651-residue polypeptide: Transcription factor E2-alpha (651 aa).

3 disordered regions span residues 32-107 (ANGK…SERN), 131-208 (LSLS…KTPS), and 341-378 (DHSSNNFSPSPSTPVGSPQGLPGTSQWPRAGAPSALSP). Low complexity-rich tracts occupy residues 56 to 73 (SSGSWGSSDQNSSSFDPS), 131 to 148 (LSLSSPGPLSPSGIKSSS), and 341 to 354 (DHSSNNFSPSPSTP). Serine 135 and serine 140 each carry phosphoserine. Residue threonine 353 is modified to Phosphothreonine. Serine 357 carries the post-translational modification Phosphoserine. Arginine 369 carries the post-translational modification Omega-N-methylarginine. Phosphoserine is present on serine 377. Residues 387-422 (LSKMEDRLDEAIHVLRSHAVGTASDLHGLLPGHGAL) are leucine-zipper. The disordered stretch occupies residues 457 to 549 (HNHASLPSQP…KAEREKERRV (93 aa)). The span at 461 to 479 (SLPSQPSSLPDLSQRPPDS) shows a compositional bias: low complexity. Lysine 496 is covalently cross-linked (Glycyl lysine isopeptide (Lys-Gly) (interchain with G-Cter in SUMO2)). Serine 526 is modified (phosphoserine). The residue at position 528 (aspartate 528) is a Phosphothreonine. Position 533 is a phosphoserine (aspartate 533). Over residues 539–549 (QKAEREKERRV) the composition is skewed to basic and acidic residues. A bHLH domain is found at 546–599 (ERRVANNARERLRVRDINEAFKELGRMCQLHLSSEKPQTKLLILHQAVAVILSL). Lysine 622 participates in a covalent cross-link: Glycyl lysine isopeptide (Lys-Gly) (interchain with G-Cter in SUMO2).

As to quaternary structure, homodimer. Heterodimer; efficient DNA binding requires dimerization with another bHLH protein. Forms a heterodimer with TWIST1 and TWIST2. Forms a heterodimer with NEUROD1; the heterodimer is inhibited in presence of ID2, but not NR0B2, to E-box element. Forms a heterodimer with TCF15; the heterodimer binds E-box element. Forms a heterodimer with MYOG; heterodimerization enhances MYOG DNA-binding and transcriptional activities. Forms a heterodimer with ATOH8; repress transcription of TCF3 and TCF3-NEUROG3 dimer-induced transactivation of E box-dependent promoters. Component of a nuclear TAL-1 complex composed at least of CBFA2T3, LDB1, TAL1 and TCF3. Interacts with NEUROD2. Interacts with EP300. Interacts with PTF1A, TGFB1I1 and UBE2I. Interacts with BHLHA9. Interacts with ASB2; the interaction is mediated by SKP2 and targets TCF3 for Notch-induced proteasomal degradation. Interacts with transcription factor ASCL5/AmeloD. Forms a heterodimer with ATOH7; required for ATOH7 DNA-binding. In terms of assembly, interacts with RALGAPA1. Interacts with FIGLA. In terms of processing, phosphorylated following NGF stimulation. Undergoes Notch-induced ubiquitination and subsequent proteasomal degradation which is mediated by ASB1 or ASB2, the substrate-recognition components of probable ECS E3 ubiquitin-protein ligase complexes.

Its subcellular location is the nucleus. Its function is as follows. Transcriptional regulator involved in the initiation of neuronal differentiation and mesenchymal to epithelial transition. Heterodimers between TCF3 and tissue-specific basic helix-loop-helix (bHLH) proteins play major roles in determining tissue-specific cell fate during embryogenesis, like muscle or early B-cell differentiation. Together with TCF15, required for the mesenchymal to epithelial transition. Dimers bind DNA on E-box motifs: 5'-CANNTG-3'. Binds to the kappa-E2 site in the kappa immunoglobulin gene enhancer. Binds to IEB1 and IEB2, which are short DNA sequences in the insulin gene transcription control region. Facilitates ATOH7 binding to DNA at the consensus sequence 5'-CAGGTG-3', and positively regulates transcriptional activity. This Mus musculus (Mouse) protein is Transcription factor E2-alpha (Tcf3).